A 195-amino-acid chain; its full sequence is Phosphoheptose isomerase (195 aa).

The region spanning 35–195 (LCVALYRGDK…EKEIFGDGVN (161 aa)) is the SIS domain. Residue 51-53 (NGG) coordinates substrate. 2 residues coordinate Zn(2+): His-60 and Glu-64. Residues Glu-64, 93–94 (ND), 119–121 (STS), Ser-124, and Gln-171 contribute to the substrate site. Positions 171 and 179 each coordinate Zn(2+).

It belongs to the SIS family. GmhA subfamily. As to quaternary structure, homotetramer. Zn(2+) is required as a cofactor.

The protein resides in the cytoplasm. It carries out the reaction 2 D-sedoheptulose 7-phosphate = D-glycero-alpha-D-manno-heptose 7-phosphate + D-glycero-beta-D-manno-heptose 7-phosphate. The protein operates within carbohydrate biosynthesis; D-glycero-D-manno-heptose 7-phosphate biosynthesis; D-glycero-alpha-D-manno-heptose 7-phosphate and D-glycero-beta-D-manno-heptose 7-phosphate from sedoheptulose 7-phosphate: step 1/1. Functionally, catalyzes the isomerization of sedoheptulose 7-phosphate in D-glycero-D-manno-heptose 7-phosphate. The protein is Phosphoheptose isomerase of Sulfurimonas denitrificans (strain ATCC 33889 / DSM 1251) (Thiomicrospira denitrificans (strain ATCC 33889 / DSM 1251)).